Consider the following 576-residue polypeptide: Rho GTPase-activating protein gacP (576 aa).

A coiled-coil region spans residues 123–189; the sequence is LKSIIKTELK…RTNFERVGID (67 aa). Residues 277-462 enclose the Rho-GAP domain; it reads EDLSVLLNRE…TIIQNFDRIF (186 aa). Positions 472–576 are disordered; the sequence is VPDTYVPPPN…DEGDAVELSD (105 aa). Residues 482-500 show a composition bias toward low complexity; it reads NTRNNSVNNFNNVQPSSFS. A compositionally biased stretch (polar residues) spans 501-513; that stretch reads ASTSRSINLNKST. A compositionally biased stretch (low complexity) spans 514 to 530; the sequence is NNPNINDDNNNNNNINN. Residues 565–576 show a composition bias toward acidic residues; the sequence is SFDEGDAVELSD.

It is found in the cytoplasm. In terms of biological role, rho GTPase-activating protein involved in the signal transduction pathway. The chain is Rho GTPase-activating protein gacP (gacP) from Dictyostelium discoideum (Social amoeba).